Here is a 426-residue protein sequence, read N- to C-terminus: Glutamyl-tRNA reductase (426 aa).

Residues 49-52 (TCNR), Ser109, 114-116 (EGQ), and Gln120 contribute to the substrate site. Cys50 serves as the catalytic Nucleophile. 189–194 (GAGETG) is an NADP(+) binding site.

Belongs to the glutamyl-tRNA reductase family. Homodimer.

The enzyme catalyses (S)-4-amino-5-oxopentanoate + tRNA(Glu) + NADP(+) = L-glutamyl-tRNA(Glu) + NADPH + H(+). Its pathway is porphyrin-containing compound metabolism; protoporphyrin-IX biosynthesis; 5-aminolevulinate from L-glutamyl-tRNA(Glu): step 1/2. In terms of biological role, catalyzes the NADPH-dependent reduction of glutamyl-tRNA(Glu) to glutamate 1-semialdehyde (GSA). This chain is Glutamyl-tRNA reductase (hemA), found in Chlorobaculum parvum (strain DSM 263 / NCIMB 8327) (Chlorobium vibrioforme subsp. thiosulfatophilum).